Consider the following 235-residue polypeptide: 1-(5-phosphoribosyl)-5-[(5-phosphoribosylamino)methylideneamino] imidazole-4-carboxamide isomerase (235 aa).

The Proton acceptor role is filled by aspartate 8. Aspartate 129 (proton donor) is an active-site residue.

The protein belongs to the HisA/HisF family.

The protein localises to the cytoplasm. The catalysed reaction is 1-(5-phospho-beta-D-ribosyl)-5-[(5-phospho-beta-D-ribosylamino)methylideneamino]imidazole-4-carboxamide = 5-[(5-phospho-1-deoxy-D-ribulos-1-ylimino)methylamino]-1-(5-phospho-beta-D-ribosyl)imidazole-4-carboxamide. The protein operates within amino-acid biosynthesis; L-histidine biosynthesis; L-histidine from 5-phospho-alpha-D-ribose 1-diphosphate: step 4/9. This is 1-(5-phosphoribosyl)-5-[(5-phosphoribosylamino)methylideneamino] imidazole-4-carboxamide isomerase from Thermoanaerobacter sp. (strain X514).